A 424-amino-acid chain; its full sequence is MSAESTCRRCDGPTAIKTRQANFCQPCFITFIQQKQRKAMEGCKVLFARPGCVLPPAINILVPISFGQSSLALLDMAHAQLEEQAKTYENAAGFTLNAVFIDCSEADPLEKEPNQIISELEKRFAHAKFTCIPLSKAFEGASSVTLKHNRDYTSFVSGISEEPTSVQQLLSCIGTKSAREDIISVLQRHLIIEEAKKQNESLPTTVAWGHNATRLAELTLSLTIKGRGNRIHAQVLEHKNPKDSISGLPEIHPLNDVLSYEIPFYNSFRNVSDLAVDTVSKPSQVTKNLSIDQLMHQYFENIQTNFPSIASTVVRTAAKLDDPNAAKQGLTPCLICASPVDPNQSLAWLTNITVNEPAAPETEEEEELSKKAHMEKSQEKTGDADRHLPVPNLCYGCIITIRDTDSFTFPKRASKQDILDEFTL.

The interval 357–385 (PAAPETEEEEELSKKAHMEKSQEKTGDAD) is disordered. A compositionally biased stretch (basic and acidic residues) spans 368-385 (LSKKAHMEKSQEKTGDAD).

It belongs to the CTU2/NCS2 family.

The protein resides in the cytoplasm. It functions in the pathway tRNA modification; 5-methoxycarbonylmethyl-2-thiouridine-tRNA biosynthesis. Plays a central role in 2-thiolation of mcm(5)S(2)U at tRNA wobble positions of tRNA(Lys), tRNA(Glu) and tRNA(Gln). May act by forming a heterodimer with NCS6 that ligates sulfur from thiocarboxylated URM1 onto the uridine of tRNAs at wobble position. Prior mcm(5) tRNA modification by the elongator complex is required for 2-thiolation. May also be involved in protein urmylation. The protein is Cytoplasmic tRNA 2-thiolation protein 2 of Yarrowia lipolytica (strain CLIB 122 / E 150) (Yeast).